Consider the following 192-residue polypeptide: MSDGETAVIQSLAPGPIDGVSYPLKMVYCGQCSMPPEYCDYSGQTDVCRAWATQNAPELLEGLEISDEPAADGDEKKKQKRGGKGSKTGAAAAQAAASGGKKKGGGPQKVTLQREPRGKKSVTVIKGLATFDIDLKVASKLFAQKFACGSSVTGADEIVIQGDVKDDLLDLIPEKWKQVTDEQIDDLGDKKR.

The interval 62–116 is disordered; the sequence is GLEISDEPAADGDEKKKQKRGGKGSKTGAAAAQAAASGGKKKGGGPQKVTLQREP. Over residues 87–99 the composition is skewed to low complexity; that stretch reads KTGAAAAQAAASG. An SUI1 domain is found at 117–176; it reads RGKKSVTVIKGLATFDIDLKVASKLFAQKFACGSSVTGADEIVIQGDVKDDLLDLIPEKW.

Belongs to the DENR family.

The polypeptide is Density-regulated protein homolog (Caenorhabditis elegans).